We begin with the raw amino-acid sequence, 314 residues long: Transcription factor TCP20 (314 aa).

Disordered stretches follow at residues 1–91 (MDPK…RGRR) and 295–314 (NHEE…GSGR). 2 stretches are compositionally biased toward basic and acidic residues: residues 38–49 (DENRKPTTEIKD) and 77–89 (SNKD…EGRG). A TCP domain is found at 78–132 (NKDRHTKVEGRGRRIRMPALCAARIFQLTRELGHKSDGETIQWLLQQAEPSIIAA).

In terms of assembly, interacts with PURA1. Interacts with SPL.

It is found in the nucleus. In terms of biological role, transcription factor that binds to the site II motif (3'-TGGGCC/T-5') in the promoter of PCNA-2 and to 3'-GCCCG/A-5' elements in the promoters of cyclin CYCB1-1 and ribosomal protein genes. The chain is Transcription factor TCP20 (TCP20) from Arabidopsis thaliana (Mouse-ear cress).